The following is a 183-amino-acid chain: UPF0398 protein LSL_0930 (183 aa).

The protein belongs to the UPF0398 family.

This is UPF0398 protein LSL_0930 from Ligilactobacillus salivarius (strain UCC118) (Lactobacillus salivarius).